A 391-amino-acid polypeptide reads, in one-letter code: Somatostatin receptor type 1 (391 aa).

Residues 1–50 form a disordered region; sequence MFPNGTASSPSSSPSPSPGSCGEGACSRGPGSGAADGMEEPGRNASQNGT. Residues 1–56 lie on the Extracellular side of the membrane; that stretch reads MFPNGTASSPSSSPSPSPGSCGEGACSRGPGSGAADGMEEPGRNASQNGTLSEGQG. Asparagine 4 is a glycosylation site (N-linked (GlcNAc...) asparagine). The span at 8–20 shows a compositional bias: low complexity; the sequence is SSPSSSPSPSPGS. Asparagine 44 and asparagine 48 each carry an N-linked (GlcNAc...) asparagine glycan. A helical membrane pass occupies residues 57–84; the sequence is SAILISFIYSVVCLVGLCGNSMVIYVIL. Topologically, residues 85-94 are cytoplasmic; that stretch reads RYAKMKTATN. The helical transmembrane segment at 95 to 120 threads the bilayer; the sequence is IYILNLAIADELLMLSVPFLVTSTLL. Residues 121 to 131 lie on the Extracellular side of the membrane; sequence RHWPFGALLCR. The cysteines at positions 130 and 208 are disulfide-linked. Residues 132 to 153 form a helical membrane-spanning segment; the sequence is LVLSVDAVNMFTSIYCLTVLSV. Over 154–175 the chain is Cytoplasmic; the sequence is DRYVAVVHPIKAARYRRPTVAK. A helical membrane pass occupies residues 176–196; that stretch reads VVNLGVWVLSLLVILPIVVFS. Over 197 to 219 the chain is Extracellular; the sequence is RTAANSDGTVACNMLMPEPAQRW. The helical transmembrane segment at 220–244 threads the bilayer; the sequence is LVGFVLYTFLMGFLLPVGAICLCYV. Over 245-270 the chain is Cytoplasmic; the sequence is LIIAKMRMVALKAGWQQRKRSERKIT. The chain crosses the membrane as a helical span at residues 271–296; that stretch reads LMVMMVVMVFVICWMPFYVVQLVNVF. At 297-303 the chain is on the extracellular side; it reads AEQDDAT. A helical membrane pass occupies residues 304–327; that stretch reads VSQLSVILGYANSCANPILYGFLS. Residues 328 to 391 are Cytoplasmic-facing; it reads DNFKRSFQRI…GTCASRISTL (64 aa). Cysteine 339 carries the S-palmitoyl cysteine lipid modification.

Belongs to the G-protein coupled receptor 1 family. Jejunum and stomach.

Its subcellular location is the cell membrane. In terms of biological role, receptor for somatostatin with higher affinity for somatostatin-14 than -28. This receptor is coupled via pertussis toxin sensitive G proteins to inhibition of adenylyl cyclase. In addition it stimulates phosphotyrosine phosphatase and Na(+)/H(+) exchanger via pertussis toxin insensitive G proteins. The sequence is that of Somatostatin receptor type 1 (Sstr1) from Mus musculus (Mouse).